The chain runs to 265 residues: Small ribosomal subunit protein uS3 (265 aa).

Positions 39 to 107 (VREFLKKKLK…PVHVNIEEIR (69 aa)) constitute a KH type-2 domain. Residues 211-265 (NDAPVVEEPQEDRRRRPGRPEGRRREGEGRPAGNRRGGAGAGRRAAPGADAKSGE) are disordered. Over residues 221 to 239 (EDRRRRPGRPEGRRREGEG) the composition is skewed to basic and acidic residues.

It belongs to the universal ribosomal protein uS3 family. In terms of assembly, part of the 30S ribosomal subunit. Forms a tight complex with proteins S10 and S14.

In terms of biological role, binds the lower part of the 30S subunit head. Binds mRNA in the 70S ribosome, positioning it for translation. This Cupriavidus metallidurans (strain ATCC 43123 / DSM 2839 / NBRC 102507 / CH34) (Ralstonia metallidurans) protein is Small ribosomal subunit protein uS3.